Consider the following 440-residue polypeptide: Asparagine--tRNA ligase (440 aa).

Belongs to the class-II aminoacyl-tRNA synthetase family. As to quaternary structure, homodimer.

Its subcellular location is the cytoplasm. It catalyses the reaction tRNA(Asn) + L-asparagine + ATP = L-asparaginyl-tRNA(Asn) + AMP + diphosphate + H(+). The polypeptide is Asparagine--tRNA ligase (Chloroflexus aurantiacus (strain ATCC 29364 / DSM 637 / Y-400-fl)).